We begin with the raw amino-acid sequence, 97 residues long: Large ribosomal subunit protein bL25 (97 aa).

Belongs to the bacterial ribosomal protein bL25 family. Part of the 50S ribosomal subunit; part of the 5S rRNA/L5/L18/L25 subcomplex. Contacts the 5S rRNA. Binds to the 5S rRNA independently of L5 and L18.

Functionally, this is one of the proteins that binds to the 5S RNA in the ribosome where it forms part of the central protuberance. In Blochmanniella pennsylvanica (strain BPEN), this protein is Large ribosomal subunit protein bL25.